The primary structure comprises 320 residues: 4-hydroxyproline 2-epimerase (320 aa).

The Proton acceptor role is filled by Cys-98. Substrate is bound by residues 99 to 100 (GH), His-218, and Asp-242. Cys-246 acts as the Proton donor in catalysis. 247 to 248 (GT) contributes to the substrate binding site.

This sequence belongs to the proline racemase family.

It catalyses the reaction trans-4-hydroxy-L-proline = cis-4-hydroxy-D-proline. In terms of biological role, catalyzes the epimerization of trans-4-hydroxy-L-proline (t4LHyp) to cis-4-hydroxy-D-proline (c4DHyp). Is likely involved in a degradation pathway that converts t4LHyp to alpha-ketoglutarate. Displays no proline racemase activity. The polypeptide is 4-hydroxyproline 2-epimerase (Burkholderia pseudomallei (strain 1710b)).